The primary structure comprises 123 residues: UPF0426 protein At1g28150, chloroplastic (123 aa).

The transit peptide at Met1–Ser26 directs the protein to the chloroplast. The interval Ser97–Glu123 is disordered. Residues Thr100 to Glu123 are compositionally biased toward acidic residues.

Belongs to the UPF0426 family.

It is found in the plastid. Its subcellular location is the chloroplast. It localises to the plastoglobule. The protein is UPF0426 protein At1g28150, chloroplastic of Arabidopsis thaliana (Mouse-ear cress).